Reading from the N-terminus, the 692-residue chain is MKREFSLENTRNIGIMAHIDAGKTTTTERILYYTGKIHKIGETHEGASQMDWMEQEQERGITITSAATTAQWAGHRVNIIDTPGHVDFTVEVERSLRVLDGAVTVLDAQSGVEPQTETVWRQATTYGVPRIVFINKMDKTGADFLYSVGTLHDRLQANAHPIQLPIGAEDQFSAIIDLVEMKATFYGDEKGTAVTEGEIPEEYRAQAEEYREKLIDAVASVDEDIMEKYLEGEEITVAELKAAIRRATIAVEFYPVICGTAFKHKGVRPMLNAVIDYLPSPVDVPAIKGTSVDGDEELERKSSDDEPFSALAFKVMTDPFVGKLTFFRVYSGTLDSGSYVQNSSKGKRERVGRILQMHANSREEISKVFAGDIAAAVGLKDTTTGDTLCDEKNLVILESMEFPEPVISLSVEPKSKADQDKMGQALQKLQEEDPTFRAHTDTETGQTIISGMGELHLDILVDRMRREFKVEANVGAPMVSYRETFRSSAKVQGKFTRQSGGRGQYGDVTIEFSPNEEGKGFEFENAIVGGVIPREYIPAVEAGLRDSLDRGVVAGYPLIDIKAKLVFGSYHDVDSNEMAFKIAASMALKEASKQCDAVILEPMMKVEVVIPEEYLGDIMGNITSRRGRVEGMDARGNSQVVRAMVPLAEMFGYATTLRSATQGRGVFSMTFDHYEEVPKSIAAEIIKKNKGE.

The tr-type G domain maps to 8–282 (ENTRNIGIMA…AVIDYLPSPV (275 aa)). GTP is bound by residues 17–24 (AHIDAGKT), 81–85 (DTPGH), and 135–138 (NKMD).

This sequence belongs to the TRAFAC class translation factor GTPase superfamily. Classic translation factor GTPase family. EF-G/EF-2 subfamily.

It is found in the cytoplasm. Its function is as follows. Catalyzes the GTP-dependent ribosomal translocation step during translation elongation. During this step, the ribosome changes from the pre-translocational (PRE) to the post-translocational (POST) state as the newly formed A-site-bound peptidyl-tRNA and P-site-bound deacylated tRNA move to the P and E sites, respectively. Catalyzes the coordinated movement of the two tRNA molecules, the mRNA and conformational changes in the ribosome. The sequence is that of Elongation factor G from Lysinibacillus sphaericus (strain C3-41).